We begin with the raw amino-acid sequence, 1683 residues long: Phospholipase D1 (1683 aa).

Disordered stretches follow at residues 1-150, 173-198, 259-289, and 384-416; these read MSNV…AYTQ, LKSS…QQVN, ILDI…SIPR, and VMEK…NITS. Serine 2 carries the post-translational modification N-acetylserine. Serine 8 and serine 30 each carry phosphoserine. Composition is skewed to basic and acidic residues over residues 20-34, 63-82, and 90-112; these read SVTE…RPDE, NGKE…DRNL, and SLDH…ENMH. A compositionally biased stretch (low complexity) spans 116-125; it reads NNLHSSNNNV. The span at 141–150 shows a compositional bias: polar residues; the sequence is RRSSSVAYTQ. Serine 145 carries the phosphoserine modification. A compositionally biased stretch (low complexity) spans 263 to 279; the sequence is TNSNHNHRGNNNNNTGE. Positions 291–487 constitute a PX domain; the sequence is SSIISISSNV…EFYELSPLGN (197 aa). Residues 392–404 are compositionally biased toward polar residues; the sequence is KPSSAASAPHTSE. A compositionally biased stretch (low complexity) spans 405–416; that stretch reads NNNNDNGSNITS. The region spanning 496–664 is the PH domain; that stretch reads QGKQGYLVIR…SSIIKMSTST (169 aa). PLD phosphodiesterase domains are found at residues 791-818 and 1091-1118; these read YFWA…CYGR and EQLY…NERS. Catalysis depends on residues histidine 796, lysine 798, aspartate 803, histidine 1096, lysine 1098, and aspartate 1103. A disordered region spans residues 1430-1465; it reads KDMRRHLSSSTESTRNGSNSLPLNEKSNEGESTNVD. The segment covering 1437–1451 has biased composition (polar residues); that stretch reads SSSTESTRNGSNSLP. A Phosphoserine modification is found at serine 1461. Residue threonine 1462 is modified to Phosphothreonine.

The protein belongs to the phospholipase D family. In terms of assembly, interacts with SRF1.

The catalysed reaction is a 1,2-diacyl-sn-glycero-3-phosphocholine + H2O = a 1,2-diacyl-sn-glycero-3-phosphate + choline + H(+). With respect to regulation, activity is dependent of phosphatidylinositol 4,5-bisphosphate and the regulator SRF1. Inhibited by magnesium. In terms of biological role, required for meiosis and spore formation. Seems to be involved in the coordinate induction of late meiotic events. PLD activity is induced under sporulation conditions and seems to be necessary to complete the meiotic cycle, but not for vegetative cell growth. This Saccharomyces cerevisiae (strain ATCC 204508 / S288c) (Baker's yeast) protein is Phospholipase D1 (SPO14).